Reading from the N-terminus, the 94-residue chain is MPIKPGEEVIFTVPIRKIKKIVPRWKRAPRAVKFVREFVARHAKAQEVIISTKVNEKIWERGIEKPPSRLRVKVKVEEEDRDGKKVRIAYVDLA.

The protein belongs to the eukaryotic ribosomal protein eL31 family.

In Pyrococcus abyssi (strain GE5 / Orsay), this protein is Large ribosomal subunit protein eL31 (rpl31e).